Reading from the N-terminus, the 242-residue chain is Histone-lysine N-methyltransferase set-1 (242 aa).

The segment at 1 to 61 (MKVAAKKLAT…TRSRKGVSVK (61 aa)) is disordered. The span at 30 to 43 (SENPSSLASHSSSS) shows a compositional bias: low complexity. The SET domain maps to 104 to 226 (RLLEVYKDVV…QGEELLYDYG (123 aa)). S-adenosyl-L-methionine contacts are provided by residues 114-116 (KGR), tyrosine 159, and 186-187 (NH).

The protein belongs to the class V-like SAM-binding methyltransferase superfamily. Histone-lysine methyltransferase family. PR/SET subfamily. In terms of tissue distribution, in embryos, it is expressed ubiquitously. In late embryos, it is expressed in hypodermal seam cells. In L3 and L4 larvae and thereafter, it is expressed in vulval precursor cells. In adult males, it is also expressed in 6 unidentified posterior cells.

The protein resides in the nucleus. It is found in the chromosome. It carries out the reaction L-lysyl(20)-[histone H4] + S-adenosyl-L-methionine = N(6)-methyl-L-lysyl(20)-[histone H4] + S-adenosyl-L-homocysteine + H(+). In terms of biological role, histone methyltransferase that specifically monomethylates 'Lys-20' of histone H4 (H4K20me1). H4K20me1 is enriched on hermaphrodite X chromosomes and during mitosis. Involved in dosage compensation by repression of X-linked gene expression in hermaphrodites. Plays a role in growth and body fat regulation downstream of the TOR complex 2 pathway. This Caenorhabditis elegans protein is Histone-lysine N-methyltransferase set-1 (set-1).